We begin with the raw amino-acid sequence, 620 residues long: Arginine--tRNA ligase (620 aa).

The 'HIGH' region signature appears at 147 to 157 (ANPTGPIHIGG).

The protein belongs to the class-I aminoacyl-tRNA synthetase family. As to quaternary structure, monomer.

It localises to the cytoplasm. The catalysed reaction is tRNA(Arg) + L-arginine + ATP = L-arginyl-tRNA(Arg) + AMP + diphosphate. This chain is Arginine--tRNA ligase, found in Bifidobacterium longum (strain DJO10A).